A 650-amino-acid chain; its full sequence is Macrolide export ATP-binding/permease protein MacB (650 aa).

The region spanning 6–244 (LKLTGITRRF…ASSPEAASSP (239 aa)) is the ABC transporter domain. Residue 42-49 (GASGSGKS) coordinates ATP. Residues 227 to 246 (QTRPEEATASSPEAASSPAT) form a disordered region. The segment covering 233–246 (ATASSPEAASSPAT) has biased composition (low complexity). The next 4 membrane-spanning stretches (helical) occupy residues 275–295 (FLTM…VALG), 523–543 (LTLL…IGVM), 580–600 (LVCL…GVLF), and 615–635 (SIIA…FFPA).

Belongs to the ABC transporter superfamily. Macrolide exporter (TC 3.A.1.122) family. As to quaternary structure, homodimer. Part of the tripartite efflux system MacAB-TolC, which is composed of an inner membrane transporter, MacB, a periplasmic membrane fusion protein, MacA, and an outer membrane component, TolC. The complex forms a large protein conduit and can translocate molecules across both the inner and outer membranes. Interacts with MacA.

It is found in the cell inner membrane. Part of the tripartite efflux system MacAB-TolC. MacB is a non-canonical ABC transporter that contains transmembrane domains (TMD), which form a pore in the inner membrane, and an ATP-binding domain (NBD), which is responsible for energy generation. Confers resistance against macrolides. This chain is Macrolide export ATP-binding/permease protein MacB, found in Pectobacterium atrosepticum (strain SCRI 1043 / ATCC BAA-672) (Erwinia carotovora subsp. atroseptica).